Here is a 928-residue protein sequence, read N- to C-terminus: TBC1 domain family member 2A (928 aa).

The residue at position 1 (M1) is an N-acetylmethionine. A compositionally biased stretch (low complexity) spans M1–E19. Residues M1–R39 form a disordered region. The interval M1–E169 is interaction with CADH1. One can recognise a PH domain in the interval P45 to W142. Residues N225–S275 are disordered. The tract at residues S295–P433 is interaction with RAC1. Positions I298–Q416 form a coiled coil. The residue at position 436 (S436) is a Phosphoserine. The Rab-GAP TBC domain occupies G625 to G817. Positions M875–A913 form a coiled coil. A phosphoserine mark is found at S915 and S920.

As to quaternary structure, interacts with activated RAC1 and CDH1. In terms of tissue distribution, expressed in a broad range of tissues, especially in kidney, liver, lung and placenta. Also expressed in keratinocytes and epithelia-containing organs. Isoform 2 is differentially expressed in prostate normal and cancer cells (at protein level).

The protein localises to the cytoplasm. Its subcellular location is the cytoplasmic vesicle. It is found in the cell junction. Functionally, acts as a GTPase-activating protein for RAB7A. Signal effector acting as a linker between RAC1 and RAB7A, leading to RAB7A inactivation and subsequent inhibition of cadherin degradation and reduced cell-cell adhesion. The sequence is that of TBC1 domain family member 2A (TBC1D2) from Homo sapiens (Human).